Here is an 863-residue protein sequence, read N- to C-terminus: Oleate activated transcription factor 3 (863 aa).

The zn(2)-C6 fungal-type DNA-binding region spans 18 to 47; the sequence is VCTNCKKRKSKCDRTKPCGTCVRLGDVDSC. Residues 52–63 show a composition bias toward polar residues; it reads DSSGQPESSPSL. Residues 52-99 form a disordered region; sequence DSSGQPESSPSLNDADPLRKQSTPAERISPGFIKKRRSSQTRQDEDHW.

The protein belongs to the OAF3 family.

The protein resides in the cytoplasm. The protein localises to the nucleus. It is found in the mitochondrion. Transcriptional inhibitor with a significantly increased number of target genes in response to oleate. The sequence is that of Oleate activated transcription factor 3 (OAF3) from Saccharomyces cerevisiae (strain ATCC 204508 / S288c) (Baker's yeast).